A 327-amino-acid polypeptide reads, in one-letter code: 4-hydroxyproline 2-epimerase (327 aa).

Residue cysteine 85 is the Proton acceptor of the active site. Substrate-binding positions include 86-87, histidine 205, and aspartate 231; that span reads GH. Cysteine 235 acts as the Proton donor in catalysis. 236–237 is a substrate binding site; sequence GT.

It belongs to the proline racemase family.

The enzyme catalyses trans-4-hydroxy-L-proline = cis-4-hydroxy-D-proline. Its function is as follows. Catalyzes the epimerization of trans-4-hydroxy-L-proline (t4LHyp) to cis-4-hydroxy-D-proline (c4DHyp). Displays no proline racemase activity. This is 4-hydroxyproline 2-epimerase from Roseibium alexandrii (strain DSM 17067 / NCIMB 14079 / DFL-11) (Labrenzia alexandrii).